We begin with the raw amino-acid sequence, 313 residues long: Olfactory receptor 51A2 (313 aa).

The Extracellular portion of the chain corresponds to 1–27 (MSIINTSYVEITTFFLVGMPGLEYAHI). N-linked (GlcNAc...) asparagine glycosylation is present at Asn5. The helical transmembrane segment at 28–48 (WISIPICSMYLIAILGNGTIL) threads the bilayer. Residues 49-56 (FIIKTEPS) are Cytoplasmic-facing. The chain crosses the membrane as a helical span at residues 57–77 (LHGPMYYFLSMLAMSDLGLSL). Topologically, residues 78 to 101 (SSLPTVLSIFLFNAPETSSSACFA) are extracellular. A disulfide bridge connects residues Cys99 and Cys191. The chain crosses the membrane as a helical span at residues 102-122 (QEFFIHGFSVLESSVLLIMSF). Residues 123-141 (DRFLAIHNPLRYTSILTTV) lie on the Cytoplasmic side of the membrane. The chain crosses the membrane as a helical span at residues 142–162 (RVAQIGIVFSFKSMLLVLPFP). At 163-198 (FTLRSLRYCKKNQLSHSYCLHQDVMKLACSDNRIDV) the chain is on the extracellular side. The chain crosses the membrane as a helical span at residues 199 to 218 (IYGFFGALCLMVDFILIAVS). The Cytoplasmic segment spans residues 219 to 238 (YTLILKTVPGIASKKEELKA). Residues 239-259 (LNTCVSHICAVIIFYLPIINL) form a helical membrane-spanning segment. Residues 260-274 (AVVHRFAGHVSPLIN) lie on the Extracellular side of the membrane. A helical transmembrane segment spans residues 275-295 (VLMANVLLLVPPLMKPIVYCV). The Cytoplasmic portion of the chain corresponds to 296–313 (KTKQIRVRVVAKLCQWKI).

Belongs to the G-protein coupled receptor 1 family.

It is found in the cell membrane. Functionally, odorant receptor. The protein is Olfactory receptor 51A2 (OR51A2) of Homo sapiens (Human).